Consider the following 753-residue polypeptide: 5-methyltetrahydropteroyltriglutamate--homocysteine methyltransferase (753 aa).

Residues 17–20 and K117 each bind 5-methyltetrahydropteroyltri-L-glutamate; that span reads RELK. L-homocysteine contacts are provided by residues 431–433 and E484; that span reads IGS. L-methionine is bound by residues 431 to 433 and E484; that span reads IGS. 5-methyltetrahydropteroyltri-L-glutamate-binding positions include 515-516 and W561; that span reads RC. D599 is an L-homocysteine binding site. L-methionine is bound at residue D599. E605 lines the 5-methyltetrahydropteroyltri-L-glutamate pocket. Zn(2+) contacts are provided by H641, C643, and E665. The Proton donor role is filled by H694. Zn(2+) is bound at residue C726.

Belongs to the vitamin-B12 independent methionine synthase family. It depends on Zn(2+) as a cofactor.

It catalyses the reaction 5-methyltetrahydropteroyltri-L-glutamate + L-homocysteine = tetrahydropteroyltri-L-glutamate + L-methionine. The protein operates within amino-acid biosynthesis; L-methionine biosynthesis via de novo pathway; L-methionine from L-homocysteine (MetE route): step 1/1. Catalyzes the transfer of a methyl group from 5-methyltetrahydrofolate to homocysteine resulting in methionine formation. This chain is 5-methyltetrahydropteroyltriglutamate--homocysteine methyltransferase, found in Escherichia coli O7:K1 (strain IAI39 / ExPEC).